We begin with the raw amino-acid sequence, 867 residues long: Heat shock 70 kDa protein 17 (867 aa).

Residues 1–24 (MGKIFSWLVVLLSLISLVPVPSES) form the signal peptide. 2 stretches are compositionally biased toward polar residues: residues 560–575 (TIDS…ATDE) and 587–598 (DAENSTASNTTA). Disordered stretches follow at residues 560-607 (TIDS…ASLG) and 829-867 (PKPK…HDEL). The segment covering 833 to 867 (PKIEKVTKTENTTKEEEQSKSSDEAAKEEESHDEL) has biased composition (basic and acidic residues). Residues 865–867 (DEL) carry the Prevents secretion from ER motif.

The protein belongs to the heat shock protein 70 (TC 1.A.33) family. HSP110/SSE subfamily.

The protein resides in the endoplasmic reticulum lumen. The chain is Heat shock 70 kDa protein 17 (HSP70-17) from Arabidopsis thaliana (Mouse-ear cress).